A 209-amino-acid chain; its full sequence is Small ribosomal subunit protein uS4 (209 aa).

Residues 99 to 162 form the S4 RNA-binding domain; that stretch reads RRLDNVVYRL…RESNKFQEMK (64 aa).

It belongs to the universal ribosomal protein uS4 family. As to quaternary structure, part of the 30S ribosomal subunit. Contacts protein S5. The interaction surface between S4 and S5 is involved in control of translational fidelity.

One of the primary rRNA binding proteins, it binds directly to 16S rRNA where it nucleates assembly of the body of the 30S subunit. Its function is as follows. With S5 and S12 plays an important role in translational accuracy. The sequence is that of Small ribosomal subunit protein uS4 from Syntrophomonas wolfei subsp. wolfei (strain DSM 2245B / Goettingen).